The sequence spans 359 residues: Salicylate carboxymethyltransferase (359 aa).

Tyr-18 provides a ligand contact to S-adenosyl-L-methionine. Residues Tyr-18, 21–25, and Gln-25 each bind substrate; that span reads NSFIQ. S-adenosyl-L-methionine is bound by residues Gly-59, 59–60, 59–61, Asn-65, 96–99, Asp-98, 129–131, and 146–148; these read GC, GCS, LNDL, SFY, and SYS. Residues 147–151 and Trp-151 each bind substrate; that span reads YSLMW. Residues Asn-162, Asp-248, Phe-250, and Asn-251 each coordinate Mg(2+). A substrate-binding site is contributed by Tyr-255.

This sequence belongs to the methyltransferase superfamily. SABATH family.

The catalysed reaction is salicylate + S-adenosyl-L-methionine = methyl salicylate + S-adenosyl-L-homocysteine. In terms of biological role, catalyzes the methylation of the free carboxyl end of the plant hormone salicylic acid (SA). Converts SA to SA methyl ester (MSA). The volatile compound MSA is hypothesized to act as an airborne signal that triggers defense responses in uninfected plants. MSA is an important chemoattractant for moth pollinated flowering plants. This Clarkia breweri (Fairy fans) protein is Salicylate carboxymethyltransferase (SAMT).